The sequence spans 116 residues: Large ribosomal subunit protein bL20c (116 aa).

This sequence belongs to the bacterial ribosomal protein bL20 family.

Its subcellular location is the plastid. It is found in the chloroplast. Binds directly to 23S ribosomal RNA and is necessary for the in vitro assembly process of the 50S ribosomal subunit. It is not involved in the protein synthesizing functions of that subunit. The sequence is that of Large ribosomal subunit protein bL20c (rpl20) from Marchantia polymorpha (Common liverwort).